Here is a 403-residue protein sequence, read N- to C-terminus: Exodeoxyribonuclease 7 large subunit (403 aa).

The protein belongs to the XseA family. As to quaternary structure, heterooligomer composed of large and small subunits.

It localises to the cytoplasm. It catalyses the reaction Exonucleolytic cleavage in either 5'- to 3'- or 3'- to 5'-direction to yield nucleoside 5'-phosphates.. Functionally, bidirectionally degrades single-stranded DNA into large acid-insoluble oligonucleotides, which are then degraded further into small acid-soluble oligonucleotides. The protein is Exodeoxyribonuclease 7 large subunit of Clostridium botulinum (strain Okra / Type B1).